Here is a 94-residue protein sequence, read N- to C-terminus: Pyrimidine/purine nucleoside phosphorylase (94 aa).

This sequence belongs to the nucleoside phosphorylase PpnP family.

It catalyses the reaction a purine D-ribonucleoside + phosphate = a purine nucleobase + alpha-D-ribose 1-phosphate. The catalysed reaction is adenosine + phosphate = alpha-D-ribose 1-phosphate + adenine. The enzyme catalyses cytidine + phosphate = cytosine + alpha-D-ribose 1-phosphate. It carries out the reaction guanosine + phosphate = alpha-D-ribose 1-phosphate + guanine. It catalyses the reaction inosine + phosphate = alpha-D-ribose 1-phosphate + hypoxanthine. The catalysed reaction is thymidine + phosphate = 2-deoxy-alpha-D-ribose 1-phosphate + thymine. The enzyme catalyses uridine + phosphate = alpha-D-ribose 1-phosphate + uracil. It carries out the reaction xanthosine + phosphate = alpha-D-ribose 1-phosphate + xanthine. Functionally, catalyzes the phosphorolysis of diverse nucleosides, yielding D-ribose 1-phosphate and the respective free bases. Can use uridine, adenosine, guanosine, cytidine, thymidine, inosine and xanthosine as substrates. Also catalyzes the reverse reactions. The sequence is that of Pyrimidine/purine nucleoside phosphorylase from Escherichia coli (strain ATCC 8739 / DSM 1576 / NBRC 3972 / NCIMB 8545 / WDCM 00012 / Crooks).